A 354-amino-acid polypeptide reads, in one-letter code: Fe(3+) ions import ATP-binding protein FbpC (354 aa).

The region spanning L4–L236 is the ABC transporter domain. G36–T43 lines the ATP pocket.

The protein belongs to the ABC transporter superfamily. Fe(3+) ion importer (TC 3.A.1.10) family. In terms of assembly, the complex is composed of two ATP-binding proteins (FbpC), two transmembrane proteins (FbpB) and a solute-binding protein (FbpA).

It localises to the cell inner membrane. The enzyme catalyses Fe(3+)(out) + ATP + H2O = Fe(3+)(in) + ADP + phosphate + H(+). Functionally, part of the ABC transporter complex FbpABC involved in Fe(3+) ions import. Responsible for energy coupling to the transport system. This chain is Fe(3+) ions import ATP-binding protein FbpC, found in Pseudomonas fluorescens (strain ATCC BAA-477 / NRRL B-23932 / Pf-5).